Consider the following 592-residue polypeptide: E3 ubiquitin-protein ligase RNF180 (592 aa).

Residues 1 to 564 lie on the Cytoplasmic side of the membrane; that stretch reads MKRSKELITK…DSRGWWFDMD (564 aa). S230 is modified (phosphoserine). Residues 432 to 474 form an RING-type zinc finger; that stretch reads CAVCLDVYFNPYMCYPCRHIFCEPCLRTLAKDNPSSTPCPLCR. The chain crosses the membrane as a helical span at residues 565–585; it reads MVIIYIYSVNWVIGFIVFCFL. Residues 586-592 are Extracellular-facing; that stretch reads CYFFFPF.

As to quaternary structure, interacts with ZIC2.

It is found in the endoplasmic reticulum membrane. The protein localises to the nucleus envelope. The catalysed reaction is S-ubiquitinyl-[E2 ubiquitin-conjugating enzyme]-L-cysteine + [acceptor protein]-L-lysine = [E2 ubiquitin-conjugating enzyme]-L-cysteine + N(6)-ubiquitinyl-[acceptor protein]-L-lysine.. Its pathway is protein modification; protein ubiquitination. Functionally, E3 ubiquitin-protein ligase which promotes polyubiquitination and degradation by the proteasome pathway of ZIC2. This Pongo abelii (Sumatran orangutan) protein is E3 ubiquitin-protein ligase RNF180 (RNF180).